The sequence spans 66 residues: Disintegrin EO5B (66 aa).

The region spanning 1-65 (NSAHPCCDPV…DCPRNPYKGK (65 aa)) is the Disintegrin domain. 4 cysteine pairs are disulfide-bonded: Cys-6/Cys-29, Cys-20/Cys-26, Cys-25/Cys-50, and Cys-38/Cys-57. A Cell attachment site; atypical (VGD) motif is present at residues 42-44 (VGD).

This sequence belongs to the disintegrin family. Dimeric disintegrin subfamily. As to quaternary structure, heterodimer with EO4A or EO5A; disulfide-linked. Expressed by the venom gland.

The protein localises to the secreted. Poor inhibitor of platelet aggregation. When it dimerizes with EO4A, it inhibits the adhesion of cells expressing the RGD-dependent integrin alpha-5/beta-1 (ITGA5/ITGB1) to immobilized fibronectin. When it dimerizes with EO5A, it inhibits the adhesion of the alpha-4/beta-1 (ITGA4/ITGB1) integrin to VCAM-1. When it dimerizes either with EO4A or EO5A, the inhibition on alpha-IIb/beta-3 (ITGA2B/ITGB3) is low. This Echis ocellatus (Ocellated saw-scaled viper) protein is Disintegrin EO5B.